Reading from the N-terminus, the 297-residue chain is Formiminotransferase cyclodeaminase-like protein (297 aa).

The segment at 2–196 (LREMLGCCKV…GVVAVGACGW (195 aa)) is formiminotransferase N-subdomain. The active-site For formimidoyltransferase activity is the H89. Position 178-187 (178-187 (GPQEVSKAKG)) interacts with folate.

It belongs to the formiminotransferase family. In terms of tissue distribution, expressed constitutively in roots, stems, leaves and flowers.

The protein resides in the golgi apparatus. It is found in the trans-Golgi network. It catalyses the reaction (6S)-5-formyl-5,6,7,8-tetrahydrofolate + L-glutamate = N-formyl-L-glutamate + (6S)-5,6,7,8-tetrahydrofolate + H(+). The enzyme catalyses 5-formimidoyltetrahydrofolate + L-glutamate = N-formimidoyl-L-glutamate + (6S)-5,6,7,8-tetrahydrofolate. It participates in one-carbon metabolism; tetrahydrofolate interconversion. Its function is as follows. Involved in the regulation of root growth. May regulate sorting and/or transportation of trans-Golgi network (TGN) vesicles in root cap peripheral cells, thus influencing the extracellular secretion of mucilage components in the root cap. The chain is Formiminotransferase cyclodeaminase-like protein from Arabidopsis thaliana (Mouse-ear cress).